The following is a 225-amino-acid chain: Uracil-DNA glycosylase (225 aa).

The Proton acceptor role is filled by Asp-65.

It belongs to the uracil-DNA glycosylase (UDG) superfamily. UNG family.

It is found in the cytoplasm. The enzyme catalyses Hydrolyzes single-stranded DNA or mismatched double-stranded DNA and polynucleotides, releasing free uracil.. Functionally, excises uracil residues from the DNA which can arise as a result of misincorporation of dUMP residues by DNA polymerase or due to deamination of cytosine. In Bacillus thuringiensis (strain Al Hakam), this protein is Uracil-DNA glycosylase.